Reading from the N-terminus, the 479-residue chain is Ribosomal RNA small subunit methyltransferase F (479 aa).

S-adenosyl-L-methionine contacts are provided by residues 125–131 (AAAPGSK), Glu149, Asp176, and Asp194. Cys247 functions as the Nucleophile in the catalytic mechanism.

The protein belongs to the class I-like SAM-binding methyltransferase superfamily. RsmB/NOP family.

Its subcellular location is the cytoplasm. The enzyme catalyses cytidine(1407) in 16S rRNA + S-adenosyl-L-methionine = 5-methylcytidine(1407) in 16S rRNA + S-adenosyl-L-homocysteine + H(+). Functionally, specifically methylates the cytosine at position 1407 (m5C1407) of 16S rRNA. This Escherichia coli O7:K1 (strain IAI39 / ExPEC) protein is Ribosomal RNA small subunit methyltransferase F.